The chain runs to 84 residues: Large ribosomal subunit protein bL31B (84 aa).

The protein belongs to the bacterial ribosomal protein bL31 family. Type B subfamily. In terms of assembly, part of the 50S ribosomal subunit.

The polypeptide is Large ribosomal subunit protein bL31B (Photorhabdus laumondii subsp. laumondii (strain DSM 15139 / CIP 105565 / TT01) (Photorhabdus luminescens subsp. laumondii)).